The following is a 408-amino-acid chain: Argininosuccinate synthase (408 aa).

ATP-binding positions include 9 to 17 (AYSGGLDTS) and alanine 36. Tyrosine 87 and serine 92 together coordinate L-citrulline. Glycine 117 is a binding site for ATP. L-aspartate contacts are provided by threonine 119, asparagine 123, and aspartate 124. Position 123 (asparagine 123) interacts with L-citrulline. L-citrulline contacts are provided by arginine 127, serine 176, serine 185, glutamate 261, and tyrosine 273.

Belongs to the argininosuccinate synthase family. Type 1 subfamily. As to quaternary structure, homotetramer.

It is found in the cytoplasm. The enzyme catalyses L-citrulline + L-aspartate + ATP = 2-(N(omega)-L-arginino)succinate + AMP + diphosphate + H(+). Its pathway is amino-acid biosynthesis; L-arginine biosynthesis; L-arginine from L-ornithine and carbamoyl phosphate: step 2/3. The protein is Argininosuccinate synthase of Deinococcus deserti (strain DSM 17065 / CIP 109153 / LMG 22923 / VCD115).